Here is a 710-residue protein sequence, read N- to C-terminus: Prolyl endopeptidase (710 aa).

At methionine 1 the chain carries N-acetylmethionine. Lysine 157 carries the post-translational modification N6-acetyllysine. Catalysis depends on charge relay system residues serine 554, aspartate 641, and histidine 680.

Belongs to the peptidase S9A family.

The protein resides in the cytoplasm. The catalysed reaction is Hydrolysis of Pro-|-Xaa &gt;&gt; Ala-|-Xaa in oligopeptides.. Functionally, cleaves peptide bonds on the C-terminal side of prolyl residues within peptides that are up to approximately 30 amino acids long. This is Prolyl endopeptidase (Prep) from Mus musculus (Mouse).